Reading from the N-terminus, the 159-residue chain is Transcriptional repressor NrdR (159 aa).

A zinc finger spans residues 3–34 (CPFCRHEDTQVVDSRVSEDGAAIRRRRRCSAC). The region spanning 49–139 (PAVVKKDGSR…VYRRFEDVSE (91 aa)) is the ATP-cone domain.

The protein belongs to the NrdR family. Zn(2+) is required as a cofactor.

In terms of biological role, negatively regulates transcription of bacterial ribonucleotide reductase nrd genes and operons by binding to NrdR-boxes. This is Transcriptional repressor NrdR from Burkholderia ambifaria (strain MC40-6).